We begin with the raw amino-acid sequence, 251 residues long: Prolactin-7B1 (251 aa).

A signal peptide spans 1–29 (MHLSLTQQCLWPLQILLVSNLLLWENVAA). The N-linked (GlcNAc...) asparagine glycan is linked to Asn-73. 2 disulfides stabilise this stretch: Cys-100–Cys-216 and Cys-233–Cys-241.

It belongs to the somatotropin/prolactin family.

The protein resides in the secreted. The chain is Prolactin-7B1 (Prl7b1) from Rattus norvegicus (Rat).